The sequence spans 619 residues: MPEYRSKTSTHGRNMAGARALWRATGVMETDFGKPIIAVANSFTQFVPGHVHLHNMGQLVAREIEKAGAIAKEFNTIAIDDGIAMGHSGMLYSLPSRDLIADSIEYMVNAHCADALVCISNCDKITPGMLIAAMRLNIPTIFVSGGPMEAGKVIGVANIQPERRLDLIDAMIESADDNVSNRQVEEVEQNACPTCGSCSGMFTANSMNCLTEALGLSLPGNGSYLATHVGRKELFLEAGRMIVEITKRYYEQNDETVLPRSIATKKAFENAMTMDIAMGGSTNTILHLLAVANEAGVDFKMADIDRLSRVVPCICKTAPNNHDYYMEDVHRAGGIFAILKELDKAGKLHTDVHTIHAPTLKDAIEKWDITNPENTRAIERFKAAPGGVRTTQAFSQNRMWKTLDLDREKGCIRDVAHAYSQDGGLAVLFGNIAERGCVVKTAGVDESILKFTGRARVFESQEDAVEGILGNQIVAGDIVIIRYEGPKGGPGMQEMLYPTSYLKSKGLGKACALLTDGRFSGGTSGLSIGHASPEAAEGGAIGLVHEGDTVEIDIPNRSIHLAISDEELAARRAEMEARGSKAWKPENRDRYVSAALRAYGAMATSADKGAVRDVAQIER.

Aspartate 81 provides a ligand contact to Mg(2+). Cysteine 122 lines the [2Fe-2S] cluster pocket. 2 residues coordinate Mg(2+): aspartate 123 and lysine 124. Lysine 124 carries the N6-carboxylysine modification. Cysteine 198 contributes to the [2Fe-2S] cluster binding site. A Mg(2+)-binding site is contributed by glutamate 494. Serine 520 (proton acceptor) is an active-site residue.

It belongs to the IlvD/Edd family. As to quaternary structure, homodimer. It depends on [2Fe-2S] cluster as a cofactor. Mg(2+) is required as a cofactor.

It catalyses the reaction (2R)-2,3-dihydroxy-3-methylbutanoate = 3-methyl-2-oxobutanoate + H2O. The enzyme catalyses (2R,3R)-2,3-dihydroxy-3-methylpentanoate = (S)-3-methyl-2-oxopentanoate + H2O. The protein operates within amino-acid biosynthesis; L-isoleucine biosynthesis; L-isoleucine from 2-oxobutanoate: step 3/4. It participates in amino-acid biosynthesis; L-valine biosynthesis; L-valine from pyruvate: step 3/4. Functionally, functions in the biosynthesis of branched-chain amino acids. Catalyzes the dehydration of (2R,3R)-2,3-dihydroxy-3-methylpentanoate (2,3-dihydroxy-3-methylvalerate) into 2-oxo-3-methylpentanoate (2-oxo-3-methylvalerate) and of (2R)-2,3-dihydroxy-3-methylbutanoate (2,3-dihydroxyisovalerate) into 2-oxo-3-methylbutanoate (2-oxoisovalerate), the penultimate precursor to L-isoleucine and L-valine, respectively. The polypeptide is Dihydroxy-acid dehydratase (Neisseria meningitidis serogroup C / serotype 2a (strain ATCC 700532 / DSM 15464 / FAM18)).